The sequence spans 211 residues: Uracil phosphoribosyltransferase (211 aa).

5-phospho-alpha-D-ribose 1-diphosphate is bound by residues arginine 79, arginine 104, and 131 to 139 (DPMLATGGS). Residues isoleucine 196 and 201 to 203 (GDA) contribute to the uracil site. Aspartate 202 contributes to the 5-phospho-alpha-D-ribose 1-diphosphate binding site.

The protein belongs to the UPRTase family. Mg(2+) serves as cofactor.

It carries out the reaction UMP + diphosphate = 5-phospho-alpha-D-ribose 1-diphosphate + uracil. Its pathway is pyrimidine metabolism; UMP biosynthesis via salvage pathway; UMP from uracil: step 1/1. Allosterically activated by GTP. Its function is as follows. Catalyzes the conversion of uracil and 5-phospho-alpha-D-ribose 1-diphosphate (PRPP) to UMP and diphosphate. This is Uracil phosphoribosyltransferase from Lactococcus lactis subsp. cremoris (strain SK11).